The chain runs to 521 residues: Protein nucleotidyltransferase YdiU (521 aa).

Positions 109, 111, 112, 131, 143, 144, 194, and 201 each coordinate ATP. The Proton acceptor role is filled by Asp-270. The Mg(2+) site is built by Asn-271 and Asp-280. ATP is bound at residue Asp-280.

It belongs to the SELO family. The cofactor is Mg(2+). Mn(2+) serves as cofactor.

The catalysed reaction is L-seryl-[protein] + ATP = 3-O-(5'-adenylyl)-L-seryl-[protein] + diphosphate. It catalyses the reaction L-threonyl-[protein] + ATP = 3-O-(5'-adenylyl)-L-threonyl-[protein] + diphosphate. The enzyme catalyses L-tyrosyl-[protein] + ATP = O-(5'-adenylyl)-L-tyrosyl-[protein] + diphosphate. It carries out the reaction L-histidyl-[protein] + UTP = N(tele)-(5'-uridylyl)-L-histidyl-[protein] + diphosphate. The catalysed reaction is L-seryl-[protein] + UTP = O-(5'-uridylyl)-L-seryl-[protein] + diphosphate. It catalyses the reaction L-tyrosyl-[protein] + UTP = O-(5'-uridylyl)-L-tyrosyl-[protein] + diphosphate. Nucleotidyltransferase involved in the post-translational modification of proteins. It can catalyze the addition of adenosine monophosphate (AMP) or uridine monophosphate (UMP) to a protein, resulting in modifications known as AMPylation and UMPylation. The protein is Protein nucleotidyltransferase YdiU of Burkholderia thailandensis (strain ATCC 700388 / DSM 13276 / CCUG 48851 / CIP 106301 / E264).